The chain runs to 892 residues: Alpha-actinin-1 (892 aa).

M1 carries the N-acetylmethionine modification. The actin-binding stretch occupies residues 1–247; that stretch reads MDHYDSQQTN…IMTYVSSFYH (247 aa). Residue S6 is modified to Phosphoserine. A Phosphotyrosine; by FAK1 modification is found at Y12. Calponin-homology (CH) domains lie at 31 to 135 and 144 to 250; these read KQQR…LRFA and TSAK…HAFS. N6-acetyllysine is present on residues K95 and K195. Spectrin repeat units follow at residues 274–384, 394–499, 509–620, and 630–733; these read QLME…WLLN, HLAE…ALER, QLYL…ALTE, and RLRK…EVEN. The interval 274-733 is interaction with DDN; the sequence is QLMEDYEKLA…IARTINEVEN (460 aa). S471 carries the post-translational modification Phosphoserine. K676 is modified (N6-acetyllysine). At S677 the chain carries Phosphoserine. EF-hand domains lie at 746–781 and 787–822; these read EQMN…LGYD and QGEA…ETAD. Ca(2+)-binding residues include D759, D761, S763, T765, and E770. Phosphoserine is present on S890.

It belongs to the alpha-actinin family. As to quaternary structure, homodimer; antiparallel. Interacts with MYOZ2, TTID and LPP. Interacts with DDN. Interacts with PSD. Interacts with MICALL2. Interacts with DNM2 and CTTN. Interacts with PDLIM1. Interacts with PDLIM2. Interacts with PDLIM4 (via PDZ domain). Interacts with IGSF8.

Its subcellular location is the cytoplasm. It is found in the cytoskeleton. The protein localises to the myofibril. It localises to the sarcomere. The protein resides in the z line. Its subcellular location is the cell membrane. It is found in the cell junction. The protein localises to the cell projection. It localises to the ruffle. F-actin cross-linking protein which is thought to anchor actin to a variety of intracellular structures. Association with IGSF8 regulates the immune synapse formation and is required for efficient T-cell activation. The chain is Alpha-actinin-1 (ACTN1) from Homo sapiens (Human).